The following is an 80-amino-acid chain: RNA-binding protein Hfq (80 aa).

Residues 10-70 (DLFLNTVRKQ…ISTIMPGQPM (61 aa)) form the Sm domain.

This sequence belongs to the Hfq family. As to quaternary structure, homohexamer.

RNA chaperone that binds small regulatory RNA (sRNAs) and mRNAs to facilitate mRNA translational regulation in response to envelope stress, environmental stress and changes in metabolite concentrations. Also binds with high specificity to tRNAs. This is RNA-binding protein Hfq from Rhizobium etli (strain CIAT 652).